Here is a 228-residue protein sequence, read N- to C-terminus: Lipoprotein LpqN (228 aa).

The first 19 residues, 1 to 19 (MKHFTAAVATVALSLALAG), serve as a signal peptide directing secretion. Residue C20 is the site of N-palmitoyl cysteine attachment. A lipid anchor (S-diacylglycerol cysteine) is attached at C20. Residues 26–53 (TDSAPTTSPTTTSPTTSTTTTSATTSAQ) form a disordered region. Residues 28 to 52 (SAPTTSPTTTSPTTSTTTTSATTSA) are compositionally biased toward low complexity.

Interacts with the periplasmic loop domains of the mycolate transporters MmpL3 and MmpL11. Also interacts with secreted cell envelope biosynthetic enzymes such as Ag85A. These interactions are weak and may require a putative mycobacterial adapter protein or molecule. Interacts with human ubiquitin ligase CBL.

It is found in the cell membrane. The protein localises to the secreted. Functionally, involved in cell envelope biogenesis. May act as a membrane fusion protein, connecting MmpL transporters with periplasmic proteins, and play a role in cell envelope lipid changes during biofilm maturation. Is also a virulence factor required for intracellular survival. Associates with CBL, a host ubiquitin ligase, and probably blocks the normal functions of CBL and disturbs CBL-mediated antibacterial activity. Interaction counteracts antibacterial defense but causes a reciprocal enhancement of antiviral defense. The polypeptide is Lipoprotein LpqN (Mycobacterium tuberculosis (strain ATCC 25618 / H37Rv)).